The following is a 213-amino-acid chain: Kynurenine formamidase (213 aa).

Trp15 provides a ligand contact to substrate. Residues His45, His49, and Asp51 each coordinate Zn(2+). His55 serves as the catalytic Proton donor/acceptor. His157 and Glu169 together coordinate Zn(2+).

Belongs to the Cyclase 1 superfamily. KynB family. Homodimer. Zn(2+) is required as a cofactor.

It carries out the reaction N-formyl-L-kynurenine + H2O = L-kynurenine + formate + H(+). It functions in the pathway amino-acid degradation; L-tryptophan degradation via kynurenine pathway; L-kynurenine from L-tryptophan: step 2/2. Functionally, catalyzes the hydrolysis of N-formyl-L-kynurenine to L-kynurenine, the second step in the kynurenine pathway of tryptophan degradation. This is Kynurenine formamidase from Deinococcus geothermalis (strain DSM 11300 / CIP 105573 / AG-3a).